The chain runs to 431 residues: Large envelope protein (431 aa).

A lipid anchor (N-myristoyl glycine; by host) is attached at Gly-2. Positions 2-148 (GNNIKVTFNP…PPLRDTHPHL (147 aa)) are pre-S1. The pre-S stretch occupies residues 2 to 207 (GNNIKVTFNP…PSTTGDPALS (206 aa)). Over 2-214 (GNNIKVTFNP…ALSPEMSPSS (213 aa)) the chain is Virion surface; in external conformation. The Intravirion; in internal conformation segment spans residues 2–286 (GNNIKVTFNP…NGFRWMYLRR (285 aa)). Asn-3 is a glycosylation site (N-linked (GlcNAc...) asparagine). The disordered stretch occupies residues 115 to 147 (IPRGLVPPQTPTNRDQGRKPTPPTPPLRDTHPH). The interval 149-207 (TMKNQTFHLQGFVDGLRDLTTTERQHNAYRDPFTTLSPAVPTVSTILSPPSTTGDPALS) is pre-S2. Residues 215-235 (LLGLLAGLQVVYFLWTKILTI) traverse the membrane as a helical segment. At 236 to 286 (AQNLDWWCTSLSFPGGIPECTGQNSQFQTCKHLPTSCPPTCNGFRWMYLRR) the chain is on the intravirion; in external conformation side. The helical transmembrane segment at 287 to 307 (FIIYLLVLLLCLIFLLVLLDW) threads the bilayer. The Virion surface segment spans residues 308–379 (KGLIPVCPLQ…WALARLSWLN (72 aa)). The N-linked (GlcNAc...) asparagine; by host glycan is linked to Asn-351. A helical membrane pass occupies residues 380-400 (LLVPLLQWLGGISLIAWFLLI). Over 401-406 (WMIWFW) the chain is Intravirion. A helical transmembrane segment spans residues 407–429 (GPALLSILPPFIPIFVLFFLIWV). At 430–431 (YI) the chain is on the virion surface side.

It belongs to the orthohepadnavirus major surface antigen family. In terms of assembly, in its internal form (Li-HBsAg), interacts with the capsid protein and with the isoform S. Interacts with host chaperone CANX. Associates with host chaperone CANX through its pre-S2 N glycan; this association may be essential for isoform M proper secretion. As to quaternary structure, interacts with isoform L. Interacts with the antigens of satellite virus HDV (HDVAgs); this interaction is required for encapsidation of HDV genomic RNA. Isoform M is N-terminally acetylated by host at a ratio of 90%, and N-glycosylated by host at the pre-S2 region. Post-translationally, myristoylated.

It is found in the virion membrane. Functionally, the large envelope protein exists in two topological conformations, one which is termed 'external' or Le-HBsAg and the other 'internal' or Li-HBsAg. In its external conformation the protein attaches the virus to cell receptors and thereby initiating infection. This interaction determines the species specificity and liver tropism. This attachment induces virion internalization predominantly through caveolin-mediated endocytosis. The large envelope protein also assures fusion between virion membrane and endosomal membrane. In its internal conformation the protein plays a role in virion morphogenesis and mediates the contact with the nucleocapsid like a matrix protein. The middle envelope protein plays an important role in the budding of the virion. It is involved in the induction of budding in a nucleocapsid independent way. In this process the majority of envelope proteins bud to form subviral lipoprotein particles of 22 nm of diameter that do not contain a nucleocapsid. The polypeptide is Large envelope protein (Marmota monax (Woodchuck)).